The following is a 199-amino-acid chain: Probable nicotinate-nucleotide adenylyltransferase (199 aa).

The protein belongs to the NadD family.

It carries out the reaction nicotinate beta-D-ribonucleotide + ATP + H(+) = deamido-NAD(+) + diphosphate. The protein operates within cofactor biosynthesis; NAD(+) biosynthesis; deamido-NAD(+) from nicotinate D-ribonucleotide: step 1/1. In terms of biological role, catalyzes the reversible adenylation of nicotinate mononucleotide (NaMN) to nicotinic acid adenine dinucleotide (NaAD). The polypeptide is Probable nicotinate-nucleotide adenylyltransferase (Leptospira interrogans serogroup Icterohaemorrhagiae serovar copenhageni (strain Fiocruz L1-130)).